The primary structure comprises 247 residues: ATP synthase subunit a, chloroplastic (247 aa).

5 helical membrane passes run 38–58 (QVLI…TLAV), 95–115 (VPFI…GALL), 134–154 (INTT…AGLS), 199–219 (LVVV…VMFL), and 220–240 (GLFT…AYIG).

It belongs to the ATPase A chain family. F-type ATPases have 2 components, CF(1) - the catalytic core - and CF(0) - the membrane proton channel. CF(1) has five subunits: alpha(3), beta(3), gamma(1), delta(1), epsilon(1). CF(0) has four main subunits: a, b, b' and c.

The protein resides in the plastid. Its subcellular location is the chloroplast thylakoid membrane. Its function is as follows. Key component of the proton channel; it plays a direct role in the translocation of protons across the membrane. In Lactuca sativa (Garden lettuce), this protein is ATP synthase subunit a, chloroplastic.